Reading from the N-terminus, the 373-residue chain is Cytoplasmic tRNA 2-thiolation protein 1 (373 aa).

It belongs to the TtcA family. CTU1/NCS6/ATPBD3 subfamily.

The protein resides in the cytoplasm. It functions in the pathway tRNA modification; 5-methoxycarbonylmethyl-2-thiouridine-tRNA biosynthesis. In terms of biological role, plays a central role in 2-thiolation of mcm(5)S(2)U at tRNA wobble positions of tRNA(Lys), tRNA(Glu) and tRNA(Gln). Directly binds tRNAs and probably acts by catalyzing adenylation of tRNAs, an intermediate required for 2-thiolation. It is unclear whether it acts as a sulfurtransferase that transfers sulfur from thiocarboxylated URM1 onto the uridine of tRNAs at wobble position. This chain is Cytoplasmic tRNA 2-thiolation protein 1, found in Caenorhabditis elegans.